The chain runs to 691 residues: NADH-ubiquinone oxidoreductase 75 kDa subunit (691 aa).

In terms of domain architecture, 2Fe-2S ferredoxin-type spans 1–78 (MVNVFVDGLS…NMKIFTNTPL (78 aa)). [2Fe-2S] cluster is bound by residues Cys34, Cys45, Cys48, and Cys62. A 4Fe-4S His(Cys)3-ligated-type domain is found at 78 to 117 (LVKKAREGVLEFLLVNHPLDCPICDQGGECDLQDLTMVYG). The [4Fe-4S] cluster site is built by His94, Cys98, Cys101, Cys107, Cys146, Cys149, Cys152, and Cys196. In terms of domain architecture, 4Fe-4S Mo/W bis-MGD-type spans 215–271 (LQSTESIDVSDAIGSNIRIDVRGSEIMRILPRLNEDVNEEWISDKARFCYDGLKRQR).

It belongs to the complex I 75 kDa subunit family. Complex I is composed of about 30 different subunits. [2Fe-2S] cluster is required as a cofactor. Requires [4Fe-4S] cluster as cofactor.

The protein localises to the mitochondrion inner membrane. It catalyses the reaction a ubiquinone + NADH + 5 H(+)(in) = a ubiquinol + NAD(+) + 4 H(+)(out). Its function is as follows. Core subunit of the mitochondrial membrane respiratory chain NADH dehydrogenase (Complex I) that is believed to belong to the minimal assembly required for catalysis. Complex I functions in the transfer of electrons from NADH to the respiratory chain. The immediate electron acceptor for the enzyme is believed to be ubiquinone. This is the largest subunit of complex I and it is a component of the iron-sulfur (IP) fragment of the enzyme. It may form part of the active site crevice where NADH is oxidized. This chain is NADH-ubiquinone oxidoreductase 75 kDa subunit (NAD11), found in Reclinomonas americana.